A 182-amino-acid chain; its full sequence is ATP-dependent protease subunit HslV (182 aa).

Residue threonine 10 is part of the active site. Residues alanine 166, cysteine 169, and serine 172 each contribute to the Na(+) site.

The protein belongs to the peptidase T1B family. HslV subfamily. In terms of assembly, a double ring-shaped homohexamer of HslV is capped on each side by a ring-shaped HslU homohexamer. The assembly of the HslU/HslV complex is dependent on binding of ATP.

The protein localises to the cytoplasm. The catalysed reaction is ATP-dependent cleavage of peptide bonds with broad specificity.. Its activity is regulated as follows. Allosterically activated by HslU binding. Functionally, protease subunit of a proteasome-like degradation complex believed to be a general protein degrading machinery. In Rickettsia africae (strain ESF-5), this protein is ATP-dependent protease subunit HslV.